We begin with the raw amino-acid sequence, 834 residues long: Periplasmic nitrate reductase (834 aa).

The tat-type signal signal peptide spans M1–A31. The region spanning I43–D99 is the 4Fe-4S Mo/W bis-MGD-type domain. [4Fe-4S] cluster-binding residues include C50, C53, C57, and C85. Residues K87, Q154, N179, C183, W216–M223, S247–H251, G266–D268, M377, Q381, N487, S513–D514, K536, D563, and T723–S732 each bind Mo-bis(molybdopterin guanine dinucleotide). W799 contributes to the substrate binding site. Mo-bis(molybdopterin guanine dinucleotide)-binding residues include N807 and K824.

Belongs to the prokaryotic molybdopterin-containing oxidoreductase family. NasA/NapA/NarB subfamily. Component of the periplasmic nitrate reductase NapAB complex composed of NapA and NapB. [4Fe-4S] cluster is required as a cofactor. It depends on Mo-bis(molybdopterin guanine dinucleotide) as a cofactor. Predicted to be exported by the Tat system. The position of the signal peptide cleavage has not been experimentally proven.

The protein resides in the periplasm. The enzyme catalyses 2 Fe(II)-[cytochrome] + nitrate + 2 H(+) = 2 Fe(III)-[cytochrome] + nitrite + H2O. Catalytic subunit of the periplasmic nitrate reductase complex NapAB. Receives electrons from NapB and catalyzes the reduction of nitrate to nitrite. In Agrobacterium fabrum (strain C58 / ATCC 33970) (Agrobacterium tumefaciens (strain C58)), this protein is Periplasmic nitrate reductase.